The chain runs to 726 residues: Catalase-peroxidase (726 aa).

Positions 1-33 (MSTTDDTHNTLSAGKCPFHQGGHDRSAGAGTAS) are disordered. The segment at residues 105–226 (WHGAGTYRSI…LGATEMGLIY (122 aa)) is a cross-link (tryptophyl-tyrosyl-methioninium (Trp-Tyr) (with M-252)). H106 serves as the catalytic Proton acceptor. The segment at residues 226-252 (YVNPEGPDHSGEPLSAAAAIRATFGNM) is a cross-link (tryptophyl-tyrosyl-methioninium (Tyr-Met) (with W-105)). Position 267 (H267) interacts with heme b.

It belongs to the peroxidase family. Peroxidase/catalase subfamily. As to quaternary structure, homodimer or homotetramer. The cofactor is heme b. In terms of processing, formation of the three residue Trp-Tyr-Met cross-link is important for the catalase, but not the peroxidase activity of the enzyme.

It catalyses the reaction H2O2 + AH2 = A + 2 H2O. The catalysed reaction is 2 H2O2 = O2 + 2 H2O. Its function is as follows. Bifunctional enzyme with both catalase and broad-spectrum peroxidase activity. The sequence is that of Catalase-peroxidase from Salmonella arizonae (strain ATCC BAA-731 / CDC346-86 / RSK2980).